We begin with the raw amino-acid sequence, 1036 residues long: Protein smoothened (1036 aa).

A signal peptide spans 1 to 31 (MQYLNFPRMPNIMMFLEVAILCLWVVADASA). At 32 to 258 (SSAKFGSTTP…DDEHRQIHKL (227 aa)) the chain is on the extracellular side. 2 N-linked (GlcNAc...) asparagine glycosylation sites follow: Asn55 and Asn95. One can recognise an FZ domain in the interval 85–206 (VRRARCYPTS…TLFPTKCTNG (122 aa)). 4 disulfides stabilise this stretch: Cys90-Cys155, Cys100-Cys148, Cys139-Cys179, and Cys172-Cys194. N-linked (GlcNAc...) asparagine glycosylation is found at Asn184, Asn195, and Asn213. Disulfide bonds link Cys218–Cys238 and Cys242–Cys320. Residues 259–279 (IGWAGSICLLSNLFVVSTFFI) traverse the membrane as a helical segment. Residues 280–287 (DWKNANKY) lie on the Cytoplasmic side of the membrane. A helical membrane pass occupies residues 288–308 (PAVIVFYINLCFLIACVGWLL). Topologically, residues 309–339 (QFTSGSREDIVCRKDGTLRHSEPTAGENLSC) are extracellular. Asn336 carries N-linked (GlcNAc...) asparagine glycosylation. An intrachain disulfide couples Cys339 to Cys413. Residues 340 to 360 (IVIFVLVYYFLTAGMVWFVFL) traverse the membrane as a helical segment. At 361 to 381 (TYAWHWRAMGHVQDRIDKKGS) the chain is on the cytoplasmic side. Residues 382–402 (YFHLVAWSLPLVLTITTMAFS) traverse the membrane as a helical segment. Residues 403 to 421 (EVDGNSIVGICFVGYINHS) are Extracellular-facing. Residue Asn419 is glycosylated (N-linked (GlcNAc...) asparagine). A helical transmembrane segment spans residues 422–442 (MRAGLLLGPLCGVILIGGYFI). Residues 443-469 (TRGMVMLFGLKHFANDIKSTSASNKIH) are Cytoplasmic-facing. The helical transmembrane segment at 470–490 (LIIMRMGVCALLTLVFILVAI) threads the bilayer. Residues 491-532 (ACHVTEFRHADEWAQSFRQFIICKISSVFEEKSSCRIENRPS) are Extracellular-facing. An intrachain disulfide couples Cys513 to Cys525. Residues 533 to 553 (VGVLQLHLLCLFSSGIVMSTW) traverse the membrane as a helical segment. Topologically, residues 554–1036 (CWTPSSIETW…KLKMLLLPSK (483 aa)) are cytoplasmic. Residues Ser658, Ser659, Ser667, Ser670, Ser673, Ser687, Ser690, and Ser693 each carry the phosphoserine modification. 2 disordered regions span residues 678 to 745 (HVSV…TSVE) and 870 to 902 (IKKS…KNPA). Positions 880 to 899 (RHSRNSARSQSKKSQKRHLK) are enriched in basic residues.

It belongs to the G-protein coupled receptor Fz/Smo family. As to quaternary structure, interacts with cos. In terms of processing, phosphorylation by CkIalpha and PKA regulates smo accumulation at the cell surface and its signaling activity in response to hh. As to expression, expressed in olfactory sensory neurons (at protein level).

It localises to the cell membrane. The protein localises to the cell projection. The protein resides in the cilium. Segment polarity protein required for correct patterning of every segment. G protein-coupled receptor which associates with the patched protein (ptc) to transduce the hedgehog (hh) signal through the activation of an inhibitory G-protein. In the absence of hh, ptc represses the constitutive signaling activity of smo through fused (fu). Essential component of a hh-signaling pathway which regulates the Duox-dependent gut immune response to bacterial uracil; required to activate Cad99C-dependent endosome formation, norpA-dependent Ca2+ mobilization and p38 MAPK, which are essential steps in the Duox-dependent production of reactive oxygen species (ROS) in response to intestinal bacterial infection. The sequence is that of Protein smoothened (smo) from Drosophila melanogaster (Fruit fly).